The following is a 266-amino-acid chain: Phosphate import ATP-binding protein PstB (266 aa).

In terms of domain architecture, ABC transporter spans Val15–Ile261. An ATP-binding site is contributed by Gly50–Ser57.

Belongs to the ABC transporter superfamily. Phosphate importer (TC 3.A.1.7) family. In terms of assembly, the complex is composed of two ATP-binding proteins (PstB), two transmembrane proteins (PstC and PstA) and a solute-binding protein (PstS).

Its subcellular location is the cell inner membrane. The enzyme catalyses phosphate(out) + ATP + H2O = ADP + 2 phosphate(in) + H(+). Its function is as follows. Part of the ABC transporter complex PstSACB involved in phosphate import. Responsible for energy coupling to the transport system. This Nitrosomonas europaea (strain ATCC 19718 / CIP 103999 / KCTC 2705 / NBRC 14298) protein is Phosphate import ATP-binding protein PstB.